Consider the following 243-residue polypeptide: Tryptophan synthase alpha chain (243 aa).

Residues glutamate 32 and aspartate 43 each act as proton acceptor in the active site.

The protein belongs to the TrpA family. Tetramer of two alpha and two beta chains.

The protein localises to the plastid. The protein resides in the chloroplast. It catalyses the reaction (1S,2R)-1-C-(indol-3-yl)glycerol 3-phosphate + L-serine = D-glyceraldehyde 3-phosphate + L-tryptophan + H2O. It participates in amino-acid biosynthesis; L-tryptophan biosynthesis; L-tryptophan from chorismate: step 5/5. Functionally, the alpha subunit is responsible for the aldol cleavage of indoleglycerol phosphate to indole and glyceraldehyde 3-phosphate. The polypeptide is Tryptophan synthase alpha chain (Cyanidioschyzon merolae (strain NIES-3377 / 10D) (Unicellular red alga)).